We begin with the raw amino-acid sequence, 156 residues long: MEPTFNKMTAAGYHAIEQEIEDLKQQRPERIRILAAAAALGDRSENAEYSSAKRDLGRLESRLRYLNKQLQYAQIVQPADNDQLDIGKFVTIEFLDDHDQITYQLVGKQEANLEQQKISFTSPIGQALANHTVDDVVTVNAPNGAYQVKVIAVKRA.

Residues 43–74 adopt a coiled-coil conformation; the sequence is RSENAEYSSAKRDLGRLESRLRYLNKQLQYAQ.

This sequence belongs to the GreA/GreB family.

In terms of biological role, necessary for efficient RNA polymerase transcription elongation past template-encoded arresting sites. The arresting sites in DNA have the property of trapping a certain fraction of elongating RNA polymerases that pass through, resulting in locked ternary complexes. Cleavage of the nascent transcript by cleavage factors such as GreA or GreB allows the resumption of elongation from the new 3'terminus. GreA releases sequences of 2 to 3 nucleotides. The polypeptide is Transcription elongation factor GreA 1 (Lactiplantibacillus plantarum (strain ATCC BAA-793 / NCIMB 8826 / WCFS1) (Lactobacillus plantarum)).